The sequence spans 222 residues: MKKMNIAIDGPAGAGKSTVAKQVAQALSFLYIDTGAMYRALTYAAIEHHVSPDDEASLKSLLDSIEIKLVDEQSKTRVYVNNTDVTDQVRTEEVTKTVSLVSSHGQVRKEMVRQQRLLAEGTNCVLDGRDIGTYVLPNAELKFFLTATVEERARRRYEENIQKGFKQSLEQLIKDIASRDEFDSNRSFAPLRKAEDAIEIDTTSLSISEVTQTIIGYVKERV.

10-18 provides a ligand contact to ATP; it reads GPAGAGKST.

The protein belongs to the cytidylate kinase family. Type 1 subfamily.

It is found in the cytoplasm. The catalysed reaction is CMP + ATP = CDP + ADP. It carries out the reaction dCMP + ATP = dCDP + ADP. This is Cytidylate kinase from Halalkalibacterium halodurans (strain ATCC BAA-125 / DSM 18197 / FERM 7344 / JCM 9153 / C-125) (Bacillus halodurans).